Here is a 250-residue protein sequence, read N- to C-terminus: 2,3-bisphosphoglycerate-dependent phosphoglycerate mutase (250 aa).

Substrate is bound by residues 8–15 (RHGESQWN), 21–22 (TG), Arg-60, 87–90 (ERHY), Lys-98, 114–115 (RR), and 183–184 (GN). Residue His-9 is the Tele-phosphohistidine intermediate of the active site. The active-site Proton donor/acceptor is the Glu-87.

The protein belongs to the phosphoglycerate mutase family. BPG-dependent PGAM subfamily. Homodimer.

The enzyme catalyses (2R)-2-phosphoglycerate = (2R)-3-phosphoglycerate. The protein operates within carbohydrate degradation; glycolysis; pyruvate from D-glyceraldehyde 3-phosphate: step 3/5. Its function is as follows. Catalyzes the interconversion of 2-phosphoglycerate and 3-phosphoglycerate. This chain is 2,3-bisphosphoglycerate-dependent phosphoglycerate mutase, found in Bordetella petrii (strain ATCC BAA-461 / DSM 12804 / CCUG 43448).